The following is a 410-amino-acid chain: Neuroserpin (410 aa).

The N-terminal stretch at 1–16 is a signal peptide; the sequence is MTYLELLALLALQSVV. 3 N-linked (GlcNAc...) asparagine glycosylation sites follow: asparagine 157, asparagine 321, and asparagine 401. Serine 403 carries an O-linked (Xyl...) (chondroitin sulfate) serine glycan.

Belongs to the serpin family. In terms of tissue distribution, detected in neurons in embryonic brain cortex (at protein level). During embryonic development mostly expressed in CNS. In adult expressed in brain and much less in spinal cord, heart, kidney and testis.

Its subcellular location is the secreted. It is found in the cytoplasmic vesicle. The protein resides in the secretory vesicle lumen. It localises to the perikaryon. Its function is as follows. Serine protease inhibitor that inhibits plasminogen activators and plasmin but not thrombin. May be involved in the formation or reorganization of synaptic connections as well as for synaptic plasticity in the adult nervous system. May protect neurons from cell damage by tissue-type plasminogen activator. This chain is Neuroserpin (Serpini1), found in Mus musculus (Mouse).